Consider the following 84-residue polypeptide: UPF0297 protein NT01CX_2279 (84 aa).

It belongs to the UPF0297 family.

The chain is UPF0297 protein NT01CX_2279 from Clostridium novyi (strain NT).